A 419-amino-acid polypeptide reads, in one-letter code: Light-independent protochlorophyllide reductase subunit N (419 aa).

3 residues coordinate [4Fe-4S] cluster: Cys-20, Cys-45, and Cys-102.

The protein belongs to the BchN/ChlN family. Protochlorophyllide reductase is composed of three subunits; BchL, BchN and BchB. Forms a heterotetramer of two BchB and two BchN subunits. [4Fe-4S] cluster is required as a cofactor.

The catalysed reaction is chlorophyllide a + oxidized 2[4Fe-4S]-[ferredoxin] + 2 ADP + 2 phosphate = protochlorophyllide a + reduced 2[4Fe-4S]-[ferredoxin] + 2 ATP + 2 H2O. It participates in porphyrin-containing compound metabolism; bacteriochlorophyll biosynthesis (light-independent). Functionally, component of the dark-operative protochlorophyllide reductase (DPOR) that uses Mg-ATP and reduced ferredoxin to reduce ring D of protochlorophyllide (Pchlide) to form chlorophyllide a (Chlide). This reaction is light-independent. The NB-protein (BchN-BchB) is the catalytic component of the complex. The protein is Light-independent protochlorophyllide reductase subunit N of Chlorobaculum tepidum (strain ATCC 49652 / DSM 12025 / NBRC 103806 / TLS) (Chlorobium tepidum).